The chain runs to 82 residues: MLVLTRKLKEAIQIGDDIEITVLAIQGDQVKLGINAPKHVEIHRKEIYLAIQAENNAASHASKSSLKRLNEQLKHLKGGKQA.

It belongs to the CsrA/RsmA family. As to quaternary structure, homodimer; the beta-strands of each monomer intercalate to form a hydrophobic core while the alpha-helices form wings that extend away from the core. Each of the alpha-helical wings interacts with an FliW monomer, yielding a FliW-CsrA(2)-FliW complex.

It localises to the cytoplasm. A translational regulator that binds mRNA to regulate translation initiation and/or mRNA stability. Usually binds in the 5'-UTR at or near the Shine-Dalgarno sequence preventing ribosome-binding, thus repressing translation. Its main target seems to be the major flagellin gene, while its function is anatagonized by FliW. The polypeptide is Translational regulator CsrA (Geobacillus thermodenitrificans (strain NG80-2)).